A 448-amino-acid polypeptide reads, in one-letter code: Exodeoxyribonuclease 7 large subunit (448 aa).

The protein belongs to the XseA family. In terms of assembly, heterooligomer composed of large and small subunits.

Its subcellular location is the cytoplasm. The catalysed reaction is Exonucleolytic cleavage in either 5'- to 3'- or 3'- to 5'-direction to yield nucleoside 5'-phosphates.. In terms of biological role, bidirectionally degrades single-stranded DNA into large acid-insoluble oligonucleotides, which are then degraded further into small acid-soluble oligonucleotides. The polypeptide is Exodeoxyribonuclease 7 large subunit (Geobacillus kaustophilus (strain HTA426)).